Consider the following 43-residue polypeptide: Snake venom metalloproteinase crotalin (43 aa).

The 43-residue stretch at 1-43 (LLRRKSHDHAQNHDGDKCLRGASLGYYQSFLNQYKPQCILNKP) folds into the Peptidase M12B domain. H13 contacts Zn(2+).

Belongs to the venom metalloproteinase (M12B) family. P-I subfamily. Monomer. Zn(2+) serves as cofactor. Post-translationally, this protein autoproteolytically degrades to 10 kDa and 14 kDa fragments in the presence of SDS. Interestingly, the two fragments, as well as reduced crotalin are able to bind vWF, indicating that the binding activity does not require a specific protein conformation. Expressed by the venom gland.

Its subcellular location is the secreted. Functionally, snake venom zinc metalloproteinase that inhibits ristocin-induced platelet aggregation by abolishing the binding of von Willebrand factor (vWF) to platelet glycoprotein Ib alpha (GPIBA) through the cleavage of both GP1BA and vWF. Also has fibrinogenolytic activities by degrading the alpha- (FGA) and beta-chain (FGB) of fibrinogen. In vivo, induces a slight hemorrhage when applied to chick chorioallantoic membrane and has potent antithrombic effect. In Crotalus atrox (Western diamondback rattlesnake), this protein is Snake venom metalloproteinase crotalin.